The sequence spans 150 residues: uncharacterized protein (150 aa).

Repeat copies occupy residues 101–105, 106–110, 111–115, 116–120, and 121–125. Residues 101-125 form a 5 X 5 AA tandem repeats of [FH]-H-[EK]-[IV]-N region; the sequence is FHEVNHHEVNHHKINHHEVNHHKIN.

Belongs to the asfivirus D129L family.

This is an uncharacterized protein from African swine fever virus (isolate Tick/Malawi/Lil 20-1/1983) (ASFV).